We begin with the raw amino-acid sequence, 127 residues long: MARIAGVDLPRDKRVEIALTYLYGIGLSRSKEILANTGVNPDTRVKDLSDEDALALRSYIEANYQIEGDLRRWETMNIKRLVDIGTYRGRRHRQGLPVRGQRTRTNARTRRGRRLTVAGKKKAPSKK.

The segment at 92-127 is disordered; sequence HRQGLPVRGQRTRTNARTRRGRRLTVAGKKKAPSKK. Residues 101–127 are compositionally biased toward basic residues; the sequence is QRTRTNARTRRGRRLTVAGKKKAPSKK.

The protein belongs to the universal ribosomal protein uS13 family. In terms of assembly, part of the 30S ribosomal subunit. Forms a loose heterodimer with protein S19. Forms two bridges to the 50S subunit in the 70S ribosome.

Functionally, located at the top of the head of the 30S subunit, it contacts several helices of the 16S rRNA. In the 70S ribosome it contacts the 23S rRNA (bridge B1a) and protein L5 of the 50S subunit (bridge B1b), connecting the 2 subunits; these bridges are implicated in subunit movement. Contacts the tRNAs in the A and P-sites. This chain is Small ribosomal subunit protein uS13, found in Gloeothece citriformis (strain PCC 7424) (Cyanothece sp. (strain PCC 7424)).